The primary structure comprises 157 residues: Protein-export protein SecB (157 aa).

This sequence belongs to the SecB family. As to quaternary structure, homotetramer, a dimer of dimers. One homotetramer interacts with 1 SecA dimer.

The protein resides in the cytoplasm. Its function is as follows. One of the proteins required for the normal export of preproteins out of the cell cytoplasm. It is a molecular chaperone that binds to a subset of precursor proteins, maintaining them in a translocation-competent state. It also specifically binds to its receptor SecA. The chain is Protein-export protein SecB from Alcanivorax borkumensis (strain ATCC 700651 / DSM 11573 / NCIMB 13689 / SK2).